Consider the following 560-residue polypeptide: MSQQHDDRRPPDTADRDLARQATSLAEKNERLTAALTAARAQLVEMKAQLEEVSKPPGSYAYFAAAHADGTADVYSAGRKLRLGVAPSVPLASLRPGQEVQLNEAMTVVAAGGYEPVGEVVTVKELIGSDRALVVGRADEERVVRLAGRLIGENVRVGDALTIEPRTGFVFERIPRSEVEDLVLEEVPDVAYADIGGLSSQIEAIRDAVELPFLHPDLFREHGLKPPKGLLLYGPPGCGKTLIAKAVATSLAHTAARRDADGEPAELPDGAARSYFLNVKGPELLNKFVGETERHIRLIFARARERASQGIPVVVFFDEMESLFRTRGTGVSSDVETTIVPQLLAEIDGVERLDNVIVIGASNREDMIDPAILRPGRLDVKIKVERPDAEAARDIFSKYLVADLPIHPDDLAEYGNDAATTVAAMIDRAVGRMYSTAPENEFLEVTYASGDKEVLYFKDFNSGAMIQNIVDRAKKHAIKDLLAGGRRGIRVDHVLEACVTEFKENEDLPNTTNPDDWARISGKKGERIVFIRTIVQKKSGETVGSVARAVENVATPGQYL.

Positions 1–19 (MSQQHDDRRPPDTADRDLA) are enriched in basic and acidic residues. Residues 1–21 (MSQQHDDRRPPDTADRDLARQ) are disordered. A coiled-coil region spans residues 16 to 55 (RDLARQATSLAEKNERLTAALTAARAQLVEMKAQLEEVSK). 237-242 (GCGKTL) is a binding site for ATP. Residues 559–560 (YL) form a docks into pockets in the proteasome alpha-ring region.

The protein belongs to the AAA ATPase family. As to quaternary structure, homohexamer. Assembles into a hexameric ring structure that caps the 20S proteasome core. Strongly interacts with the prokaryotic ubiquitin-like protein Pup through a hydrophobic interface; the interacting region of ARC lies in its N-terminal coiled-coil domain. There is one Pup binding site per ARC hexamer ring. Upon ATP-binding, the C-terminus of ARC interacts with the alpha-rings of the proteasome core, possibly by binding to the intersubunit pockets.

Its pathway is protein degradation; proteasomal Pup-dependent pathway. Its function is as follows. ATPase which is responsible for recognizing, binding, unfolding and translocation of pupylated proteins into the bacterial 20S proteasome core particle. May be essential for opening the gate of the 20S proteasome via an interaction with its C-terminus, thereby allowing substrate entry and access to the site of proteolysis. Thus, the C-termini of the proteasomal ATPase may function like a 'key in a lock' to induce gate opening and therefore regulate proteolysis. The protein is Proteasome-associated ATPase of Beutenbergia cavernae (strain ATCC BAA-8 / DSM 12333 / CCUG 43141 / JCM 11478 / NBRC 16432 / NCIMB 13614 / HKI 0122).